The chain runs to 254 residues: Ubiquinone biosynthesis O-methyltransferase (254 aa).

The S-adenosyl-L-methionine site is built by Arg47, Gly76, Asp97, and Leu141.

Belongs to the methyltransferase superfamily. UbiG/COQ3 family.

The catalysed reaction is a 3-demethylubiquinol + S-adenosyl-L-methionine = a ubiquinol + S-adenosyl-L-homocysteine + H(+). It carries out the reaction a 3-(all-trans-polyprenyl)benzene-1,2-diol + S-adenosyl-L-methionine = a 2-methoxy-6-(all-trans-polyprenyl)phenol + S-adenosyl-L-homocysteine + H(+). It participates in cofactor biosynthesis; ubiquinone biosynthesis. In terms of biological role, O-methyltransferase that catalyzes the 2 O-methylation steps in the ubiquinone biosynthetic pathway. The polypeptide is Ubiquinone biosynthesis O-methyltransferase (Maricaulis maris (strain MCS10) (Caulobacter maris)).